The following is a 415-amino-acid chain: All trans-polyprenyl-diphosphate synthase PDSS1 (415 aa).

Positions 16 to 35 are disordered; that stretch reads PAARSPGPGSPGRAGPLGPS. Positions 134, 137, and 173 each coordinate isopentenyl diphosphate. The Mg(2+) site is built by Asp180 and Asp184. Arg190 serves as a coordination point for isopentenyl diphosphate.

Belongs to the FPP/GGPP synthase family. Heterotetramer composed of 2 PDSS1/DPS1 and 2 PDSS2/DLP1 subunits. The cofactor is Mg(2+).

The protein localises to the mitochondrion. It catalyses the reaction 7 isopentenyl diphosphate + (2E,6E)-farnesyl diphosphate = all-trans-decaprenyl diphosphate + 7 diphosphate. The catalysed reaction is 6 isopentenyl diphosphate + (2E,6E)-farnesyl diphosphate = all-trans-nonaprenyl diphosphate + 6 diphosphate. The protein operates within cofactor biosynthesis; ubiquinone biosynthesis. In terms of biological role, heterotetrameric enzyme that catalyzes the condensation of farnesyl diphosphate (FPP), which acts as a primer, and isopentenyl diphosphate (IPP) to produce prenyl diphosphates of varying chain lengths and participates in the determination of the side chain of ubiquinone. Supplies nona and decaprenyl diphosphate, the precursors for the side chain of the isoprenoid quinones ubiquinone-9 (Q9)and ubiquinone-10 (Q10) respectively. The enzyme adds isopentenyl diphosphate molecules sequentially to farnesyl diphosphate with trans stereochemistry. The protein is All trans-polyprenyl-diphosphate synthase PDSS1 of Homo sapiens (Human).